Consider the following 510-residue polypeptide: MSQSALHTEFGDIAGLRAALAERRVSAVELAESGLAAAQAAAGLNAFLHIDPELTLVQARAADAALAAGTAGPLAGIPIAHKDAFVTRGWRSTAGSKMLRDYLSPFDATVVERLQAAGAVSLGKLNCDEFAMGSGNENSAFGPARNPWDLAAVPGGSSGGSAAAVAARLVAGATGTDTGGSVRQPAALCGVSGIKPTYGTVSRYGMIAFGSSLDQAGPLAPSSRDLLELLDVMSGFDPRDATSLERCDDAANAPGRIRAAFDAAQNGYQAAGSQPLKGLRIGVPAEFFGAGLTPDVAAAVEAALRQFEALGAERVAISLPRTELAIPAYYVIAPAEASSNLARFDGVRYGHRAAEYSDLNEMISRSRAEGFGDEVKRRILIGAYVLSHGYYDAYYLQAQRLRRLIAQDFQRAFAGQCDVIMGPVAPSVAKNIGENRDDPTADWLADVYTLGVSLAGLPAMSVPCGFGAAGRPVGLQIIGNYFDEGRLLAIADRYQQVTDWHQRTPATQDA.

Residues Lys-82 and Ser-157 each act as charge relay system in the active site. The active-site Acyl-ester intermediate is Ser-181.

The protein belongs to the amidase family. GatA subfamily. As to quaternary structure, heterotrimer of A, B and C subunits.

It carries out the reaction L-glutamyl-tRNA(Gln) + L-glutamine + ATP + H2O = L-glutaminyl-tRNA(Gln) + L-glutamate + ADP + phosphate + H(+). Allows the formation of correctly charged Gln-tRNA(Gln) through the transamidation of misacylated Glu-tRNA(Gln) in organisms which lack glutaminyl-tRNA synthetase. The reaction takes place in the presence of glutamine and ATP through an activated gamma-phospho-Glu-tRNA(Gln). The polypeptide is Glutamyl-tRNA(Gln) amidotransferase subunit A (Bordetella avium (strain 197N)).